Here is a 308-residue protein sequence, read N- to C-terminus: Very-long-chain enoyl-CoA reductase (308 aa).

Topologically, residues 1-86 (MKHYEVEILD…YFRDLGAQIS (86 aa)) are cytoplasmic. Lys22 is subject to N6-acetyllysine. Ser58 carries the post-translational modification Phosphoserine. Lys60 carries the N6-acetyllysine modification. A helical membrane pass occupies residues 87 to 106 (WVTVFLTEYAGPLFIYLLFY). The Lumenal portion of the chain corresponds to 107–124 (FRVPFIYGRKYDFTSSRH). A helical transmembrane segment spans residues 125-147 (TVVHLACICHSFHYIKRLLETLF). The Cytoplasmic segment spans residues 148–158 (VHRFSHGTMPL). A helical transmembrane segment spans residues 159-180 (RNIFKNCTYYWGFAAWMAYYIN). Over 181-189 (HPLYTPPTY) the chain is Lumenal. The helical transmembrane segment at 190-216 (GAQQVKLALAIFVICQLGNFSIHMALR) threads the bilayer. Topologically, residues 217–245 (DLRPAGSKTRKIPYPTRNPFTWLFLLVSC) are cytoplasmic. Residues 246–262 (PNYTYEVGSWIGFAIMT) form a helical membrane-spanning segment. The Lumenal portion of the chain corresponds to 263–264 (QC). The chain crosses the membrane as a helical span at residues 265–292 (LPVALFSLVGFTQMTIWAKGKHRSYLKE). The Cytoplasmic portion of the chain corresponds to 293–308 (FRDYPPLRMPIIPFLL).

Belongs to the steroid 5-alpha reductase family. In terms of assembly, interacts with ELOVL1 and LASS2. Post-translationally, glycosylated.

It localises to the endoplasmic reticulum membrane. It catalyses the reaction a very-long-chain 2,3-saturated fatty acyl-CoA + NADP(+) = a very-long-chain (2E)-enoyl-CoA + NADPH + H(+). The catalysed reaction is octadecanoyl-CoA + NADP(+) = (2E)-octadecenoyl-CoA + NADPH + H(+). It carries out the reaction (2E,7Z,10Z,13Z,16Z)-docosapentaenoyl-CoA + NADPH + H(+) = (7Z,10Z,13Z,16Z)-docosatetraenoyl-CoA + NADP(+). The enzyme catalyses (2E,7Z,10Z,13Z,16Z,19Z)-docosahexaenoyl-CoA + NADPH + H(+) = (7Z,10Z,13Z,16Z,19Z)-docosapentaenoyl-CoA + NADP(+). It catalyses the reaction (2E,8Z,11Z,14Z)-eicosatetraenoyl-CoA + NADPH + H(+) = (8Z,11Z,14Z)-eicosatrienoyl-CoA + NADP(+). The catalysed reaction is (2E)-hexadecenoyl-CoA + NADPH + H(+) = hexadecanoyl-CoA + NADP(+). It participates in lipid metabolism; fatty acid biosynthesis. It functions in the pathway lipid metabolism; sphingolipid metabolism. Its function is as follows. Involved in both the production of very long-chain fatty acids for sphingolipid synthesis and the degradation of the sphingosine moiety in sphingolipids through the sphingosine 1-phosphate metabolic pathway. Catalyzes the last of the four reactions of the long-chain fatty acids elongation cycle. This endoplasmic reticulum-bound enzymatic process, allows the addition of 2 carbons to the chain of long- and very long-chain fatty acids/VLCFAs per cycle. This enzyme reduces the trans-2,3-enoyl-CoA fatty acid intermediate to an acyl-CoA that can be further elongated by entering a new cycle of elongation. Thereby, it participates in the production of VLCFAs of different chain lengths that are involved in multiple biological processes as precursors of membrane lipids and lipid mediators. Catalyzes the saturation step of the sphingosine 1-phosphate metabolic pathway, the conversion of trans-2-hexadecenoyl-CoA to palmitoyl-CoA. The protein is Very-long-chain enoyl-CoA reductase (TECR) of Bos taurus (Bovine).